We begin with the raw amino-acid sequence, 500 residues long: ADP,ATP carrier protein 5 (500 aa).

11 consecutive transmembrane segments (helical) span residues 26–46 (LGKFIPISALMFCILFNQNIL), 62–82 (IAGFAKVYCVTPVAALFVIIY), 94–114 (IFYYLSAFFISCFILFAFVIY), 149–169 (YIVYYSLAELWPNIFYVLLFW), 184–204 (FYTLFSLFGNSSLILVGFLMM), 224–244 (ITLVQVSTTIVAIVAIICCLL), 287–307 (LWLLLICSAAFGFAINLVEAV), 328–348 (LYILWTGVAIIVMTIIGNNVM), 357–377 (AVISPVIIMVTGILFFVLIVF), 381–401 (ILSLFDGAILMSPLALAVSIG), and 469–489 (SISPILMVVFTFVCFAWIYAV).

This sequence belongs to the ADP/ATP translocase tlc family.

It is found in the cell membrane. Its function is as follows. Provides the rickettsial cell with host ATP in exchange for rickettsial ADP. This is an obligate exchange system. This energy acquiring activity is an important component of rickettsial parasitism. The polypeptide is ADP,ATP carrier protein 5 (tlcE) (Rickettsia typhi (strain ATCC VR-144 / Wilmington)).